The following is a 457-amino-acid chain: Multidrug resistance protein MdtK (457 aa).

At 1 to 10 (MQKYISEARL) the chain is on the cytoplasmic side. A helical transmembrane segment spans residues 11-31 (LLALAIPVILAQIAQTAMGFV). The Periplasmic portion of the chain corresponds to 32 to 52 (DTVMAGGYSATDMAAVAIGTS). Residues 53–73 (IWLPAILFGHGLLLALTPVIA) form a helical membrane-spanning segment. Over 74-92 (QLNGSGRRERIAHQVRQGF) the chain is Cytoplasmic. Residues 93–113 (WLAGFVSVLIMLVLWNAGYII) form a helical membrane-spanning segment. Residues 114-126 (RYMENIDPALADK) lie on the Periplasmic side of the membrane. The chain crosses the membrane as a helical span at residues 127–147 (AVGYLRALLWGAPGYLFFQVA). Topologically, residues 148 to 159 (RNQCEGLAKAKP) are cytoplasmic. A helical transmembrane segment spans residues 160-180 (GMVMGFIGLLVNIPVNYIFIY). Residues 181 to 188 (GHFGMPEL) are Periplasmic-facing. Residues 189–209 (GGVGCGVATAAVYWVMFLAMV) traverse the membrane as a helical segment. Residues 210–242 (SYIKRARSMRDIRNEKGTAKPEPAVMKRLIQLG) lie on the Cytoplasmic side of the membrane. The helical transmembrane segment at 243–263 (LPIALALFLEVTLFAVVALLV) threads the bilayer. Topologically, residues 264–275 (SPLGIVDVAGHQ) are periplasmic. The chain crosses the membrane as a helical span at residues 276 to 296 (IALNFSSLMFVLPMSLAAAVT). Residues 297-313 (IRVGYRLGQGSTLDAQT) are Cytoplasmic-facing. The helical transmembrane segment at 314–334 (AARTGLMVGVCMATLTAIFTV) threads the bilayer. The Periplasmic portion of the chain corresponds to 335-349 (SLREQIALLYNDNPE). Residues 350–370 (VVTLAAHLMLLAAVYQISDSI) form a helical membrane-spanning segment. Over 371-386 (QVIGSGILRGYKDTRS) the chain is Cytoplasmic. Residues 387–407 (IFYITFTAYWVLGLPSGYILA) form a helical membrane-spanning segment. Topologically, residues 408–417 (LTDLVVEPMG) are periplasmic. The helical transmembrane segment at 418–438 (PAGFWIGFIIGLTSAAIMMML) threads the bilayer. The Cytoplasmic segment spans residues 439–457 (RMRFLQRMPSAIILQRASR).

The protein belongs to the multi antimicrobial extrusion (MATE) (TC 2.A.66.1) family. MdtK subfamily.

The protein resides in the cell inner membrane. Multidrug efflux pump that functions probably as a Na(+)/drug antiporter. This chain is Multidrug resistance protein MdtK, found in Shigella flexneri serotype 5b (strain 8401).